The sequence spans 397 residues: Nuclear pore complex-interacting protein family member B2 (397 aa).

A disordered region spans residues asparagine 256 to alanine 397. A compositionally biased stretch (polar residues) spans glutamine 267 to serine 277. Over residues leucine 278–threonine 287 the composition is skewed to low complexity. Over residues lysine 382–threonine 391 the composition is skewed to basic residues.

Belongs to the NPIP family.

The protein resides in the nucleus. This is Nuclear pore complex-interacting protein family member B2 from Homo sapiens (Human).